A 139-amino-acid polypeptide reads, in one-letter code: Heavy metal-associated isoprenylated plant protein 13 (139 aa).

The HMA domain maps to 3–70 (PMKAVLQLSI…LCNTELVSVE (68 aa)). Residues 70–94 (EVVKPPEKKPEPEKPAPPKPAPAPA) form a disordered region. Positions 73 to 85 (KPPEKKPEPEKPA) are enriched in basic and acidic residues. Cysteine methyl ester is present on C136. C136 is lipidated: S-farnesyl cysteine. The propeptide at 137–139 (VIM) is removed in mature form.

This sequence belongs to the HIPP family.

Its function is as follows. Probable heavy-metal-binding protein. This Arabidopsis thaliana (Mouse-ear cress) protein is Heavy metal-associated isoprenylated plant protein 13.